Consider the following 607-residue polypeptide: Glutamine--fructose-6-phosphate aminotransferase [isomerizing] (607 aa).

Cys2 serves as the catalytic Nucleophile; for GATase activity. The 216-residue stretch at Cys2–Glu217 folds into the Glutamine amidotransferase type-2 domain. SIS domains follow at residues Thr277–Phe422 and Ile455–Pro597. Catalysis depends on Lys602, which acts as the For Fru-6P isomerization activity.

In terms of assembly, homodimer.

It is found in the cytoplasm. The enzyme catalyses D-fructose 6-phosphate + L-glutamine = D-glucosamine 6-phosphate + L-glutamate. Catalyzes the first step in hexosamine metabolism, converting fructose-6P into glucosamine-6P using glutamine as a nitrogen source. This chain is Glutamine--fructose-6-phosphate aminotransferase [isomerizing], found in Bartonella henselae (strain ATCC 49882 / DSM 28221 / CCUG 30454 / Houston 1) (Rochalimaea henselae).